A 641-amino-acid chain; its full sequence is UvrABC system protein C (641 aa).

Residues 16–95 (ESPGVYRFWD…IKQYEPRFNI (80 aa)) enclose the GIY-YIG domain. Residues 208–243 (TEYLRRLEKDMRAAAAAEDFERAARLRDDAAALRLA) form the UVR domain.

Belongs to the UvrC family. In terms of assembly, interacts with UvrB in an incision complex.

It localises to the cytoplasm. The UvrABC repair system catalyzes the recognition and processing of DNA lesions. UvrC both incises the 5' and 3' sides of the lesion. The N-terminal half is responsible for the 3' incision and the C-terminal half is responsible for the 5' incision. The protein is UvrABC system protein C of Acidothermus cellulolyticus (strain ATCC 43068 / DSM 8971 / 11B).